The following is a 237-amino-acid chain: Urease accessory protein UreF (237 aa).

Belongs to the UreF family. In terms of assembly, ureD, UreF and UreG form a complex that acts as a GTP-hydrolysis-dependent molecular chaperone, activating the urease apoprotein by helping to assemble the nickel containing metallocenter of UreC. The UreE protein probably delivers the nickel.

It is found in the cytoplasm. Its function is as follows. Required for maturation of urease via the functional incorporation of the urease nickel metallocenter. In Streptococcus salivarius (strain 57.I), this protein is Urease accessory protein UreF.